The sequence spans 543 residues: Formate--tetrahydrofolate ligase (543 aa).

54 to 61 lines the ATP pocket; that stretch reads TPAGEGKT.

The protein belongs to the formate--tetrahydrofolate ligase family.

The enzyme catalyses (6S)-5,6,7,8-tetrahydrofolate + formate + ATP = (6R)-10-formyltetrahydrofolate + ADP + phosphate. The protein operates within one-carbon metabolism; tetrahydrofolate interconversion. The chain is Formate--tetrahydrofolate ligase from Thermus thermophilus (strain ATCC BAA-163 / DSM 7039 / HB27).